We begin with the raw amino-acid sequence, 775 residues long: Thiamine repressible genes regulatory protein thi1 (775 aa).

The segment at residues Cys-39–Cys-65 is a DNA-binding region (zn(2)-C6 fungal-type). Ser-208 bears the Phosphoserine mark. 2 disordered regions span residues Leu-676 to Phe-695 and Asn-754 to Gly-775.

The protein localises to the nucleus. Transcription factor that activates the nmt1 promoter. Regulation of thiamine repressible genes. Positively regulates conjugation during meiosis. The protein is Thiamine repressible genes regulatory protein thi1 (thi1) of Schizosaccharomyces pombe (strain 972 / ATCC 24843) (Fission yeast).